Consider the following 275-residue polypeptide: Formamidopyrimidine-DNA glycosylase (275 aa).

The active-site Schiff-base intermediate with DNA is proline 2. The active-site Proton donor is glutamate 3. Lysine 58 (proton donor; for beta-elimination activity) is an active-site residue. The DNA site is built by histidine 93, arginine 111, and arginine 156. The segment at phenylalanine 241–arginine 275 adopts an FPG-type zinc-finger fold. Arginine 265 serves as the catalytic Proton donor; for delta-elimination activity.

This sequence belongs to the FPG family. Monomer. Zn(2+) serves as cofactor.

It carries out the reaction Hydrolysis of DNA containing ring-opened 7-methylguanine residues, releasing 2,6-diamino-4-hydroxy-5-(N-methyl)formamidopyrimidine.. The catalysed reaction is 2'-deoxyribonucleotide-(2'-deoxyribose 5'-phosphate)-2'-deoxyribonucleotide-DNA = a 3'-end 2'-deoxyribonucleotide-(2,3-dehydro-2,3-deoxyribose 5'-phosphate)-DNA + a 5'-end 5'-phospho-2'-deoxyribonucleoside-DNA + H(+). Its function is as follows. Involved in base excision repair of DNA damaged by oxidation or by mutagenic agents. Acts as a DNA glycosylase that recognizes and removes damaged bases. Has a preference for oxidized purines, such as 7,8-dihydro-8-oxoguanine (8-oxoG). Has AP (apurinic/apyrimidinic) lyase activity and introduces nicks in the DNA strand. Cleaves the DNA backbone by beta-delta elimination to generate a single-strand break at the site of the removed base with both 3'- and 5'-phosphates. The protein is Formamidopyrimidine-DNA glycosylase of Burkholderia lata (strain ATCC 17760 / DSM 23089 / LMG 22485 / NCIMB 9086 / R18194 / 383).